We begin with the raw amino-acid sequence, 385 residues long: Chorismate synthase (385 aa).

A disordered region spans residues 43–63; that stretch reads PDLDRRRPGTSRHVTQRNEPD. 2 residues coordinate NADP(+): Arg-48 and Arg-54. FMN-binding positions include 125 to 127, 238 to 239, Gly-278, 293 to 297, and Arg-319; these read RSS, NA, and KPTSS. Low complexity predominate over residues 363-372; the sequence is AQAPRTETAP. The segment at 363–385 is disordered; the sequence is AQAPRTETAPATPPLDAGDDIEA.

This sequence belongs to the chorismate synthase family. Homotetramer. Requires FMNH2 as cofactor.

It catalyses the reaction 5-O-(1-carboxyvinyl)-3-phosphoshikimate = chorismate + phosphate. It functions in the pathway metabolic intermediate biosynthesis; chorismate biosynthesis; chorismate from D-erythrose 4-phosphate and phosphoenolpyruvate: step 7/7. Functionally, catalyzes the anti-1,4-elimination of the C-3 phosphate and the C-6 proR hydrogen from 5-enolpyruvylshikimate-3-phosphate (EPSP) to yield chorismate, which is the branch point compound that serves as the starting substrate for the three terminal pathways of aromatic amino acid biosynthesis. This reaction introduces a second double bond into the aromatic ring system. This is Chorismate synthase from Leptothrix cholodnii (strain ATCC 51168 / LMG 8142 / SP-6) (Leptothrix discophora (strain SP-6)).